Here is a 119-residue protein sequence, read N- to C-terminus: Large ribosomal subunit protein uL18 (119 aa).

The protein belongs to the universal ribosomal protein uL18 family. Part of the 50S ribosomal subunit; part of the 5S rRNA/L5/L18/L25 subcomplex. Contacts the 5S and 23S rRNAs.

Functionally, this is one of the proteins that bind and probably mediate the attachment of the 5S RNA into the large ribosomal subunit, where it forms part of the central protuberance. The protein is Large ribosomal subunit protein uL18 of Clostridium tetani (strain Massachusetts / E88).